A 663-amino-acid polypeptide reads, in one-letter code: Chaperone protein HtpG (663 aa).

The interval 1 to 352 (MTKQTLSFQA…SADLPLNVSR (352 aa)) is a; substrate-binding. Residues 218 to 228 (ELINPSDEKGG) are compositionally biased toward basic and acidic residues. The segment at 218–237 (ELINPSDEKGGRQPGGMVKT) is disordered. Residues 353-595 (ELLQESRDVK…DHGMSTQLAR (243 aa)) are b. The c stretch occupies residues 596-663 (MLKQAGQAAP…YVKRVNALLV (68 aa)).

It belongs to the heat shock protein 90 family. As to quaternary structure, homodimer.

The protein localises to the cytoplasm. Its function is as follows. Molecular chaperone. Has ATPase activity. This chain is Chaperone protein HtpG, found in Albidiferax ferrireducens (strain ATCC BAA-621 / DSM 15236 / T118) (Rhodoferax ferrireducens).